We begin with the raw amino-acid sequence, 150 residues long: Cell division protein SepF (150 aa).

This sequence belongs to the SepF family. In terms of assembly, homodimer. Interacts with FtsZ.

Its subcellular location is the cytoplasm. Cell division protein that is part of the divisome complex and is recruited early to the Z-ring. Probably stimulates Z-ring formation, perhaps through the cross-linking of FtsZ protofilaments. Its function overlaps with FtsA. This chain is Cell division protein SepF, found in Clostridium kluyveri (strain NBRC 12016).